The sequence spans 369 residues: Protein phosphatase 1 regulatory inhibitor subunit PPP1R8 homolog (369 aa).

Over residues 1–11 the composition is skewed to basic and acidic residues; the sequence is MYGRSGLDRFK. The interval 1-26 is disordered; sequence MYGRSGLDRFKKSQTSEPFSVSANPP. Residues 13–23 are compositionally biased toward polar residues; that stretch reads SQTSEPFSVSA. In terms of domain architecture, FHA spans 87 to 138; sequence HIFGRQHQTCDFVLDHQSVSRQHAAVVPHKNGSIFVIDLGSAHGTFVANERL. The tract at residues 345–369 is disordered; it reads VSQPAAETECGGVGEEDDNDDLFGD. Over residues 358 to 369 the composition is skewed to acidic residues; the sequence is GEEDDNDDLFGD.

In terms of assembly, interacts with human protein phosphatase PPP1C.

Its function is as follows. Inhibitor of protein-phosphatase 1 (PP1). Binds to and inhibits PP1 activity. The sequence is that of Protein phosphatase 1 regulatory inhibitor subunit PPP1R8 homolog from Arabidopsis thaliana (Mouse-ear cress).